The chain runs to 127 residues: E3 ubiquitin-protein ligase PPP1R11 (127 aa).

2 disordered regions span residues 1 to 55 (MAEA…EHMG) and 70 to 127 (AFGE…PMQH). N-acetylalanine is present on alanine 2. Positions 11 to 23 (ETVTETTVTVTTE) are enriched in low complexity. The segment covering 40–55 (KKVEWSSDTVDNEHMG) has biased composition (basic and acidic residues). Residues 53 to 63 (HMGRRSSKCCC) are atypical RING finger domain 1. Residues serine 74 and serine 75 each carry the phosphoserine modification. The residue at position 76 (threonine 76) is a Phosphothreonine. Residue serine 78 is modified to Phosphoserine. An atypical RING finger domain 2 region spans residues 86–95 (CGHTHCVRGH). Basic residues predominate over residues 90 to 100 (HCVRGHRKGRR). The segment covering 103–127 (TPGPTPTTPPQPPDPSQPPPGPMQH) has biased composition (pro residues). Residue threonine 110 is modified to Phosphothreonine.

In terms of assembly, interacts with TLR2 and UBE2D2. In terms of processing, auto-ubiquitinated.

The enzyme catalyses S-ubiquitinyl-[E2 ubiquitin-conjugating enzyme]-L-cysteine + [acceptor protein]-L-lysine = [E2 ubiquitin-conjugating enzyme]-L-cysteine + N(6)-ubiquitinyl-[acceptor protein]-L-lysine.. Its pathway is protein modification; protein ubiquitination. Functionally, atypical E3 ubiquitin-protein ligase which ubiquitinates TLR2 at 'Lys-754' leading to its degradation by the proteasome. Plays a role in regulating inflammatory cytokine release and gram-positive bacterial clearance by functioning, in part, through the ubiquitination and degradation of TLR2. Inhibitor of protein phosphatase 1. The protein is E3 ubiquitin-protein ligase PPP1R11 (Ppp1r11) of Rattus norvegicus (Rat).